A 564-amino-acid polypeptide reads, in one-letter code: Pyruvate decarboxylase (564 aa).

Pyruvate is bound by residues Asp-28 and His-115. Thiamine diphosphate is bound by residues Thr-390 and 413-415; that span reads GSI. Asp-444 is a Mg(2+) binding site. Thiamine diphosphate-binding positions include 445 to 446 and 471 to 476; these read GS and NDGYTI. Mg(2+) contacts are provided by Asn-471 and Gly-473. Glu-477 serves as a coordination point for pyruvate.

This sequence belongs to the TPP enzyme family. In terms of assembly, homotetramer. It depends on Mg(2+) as a cofactor. Requires thiamine diphosphate as cofactor.

It carries out the reaction a 2-oxocarboxylate + H(+) = an aldehyde + CO2. The catalysed reaction is pyruvate + H(+) = acetaldehyde + CO2. This is Pyruvate decarboxylase (PDC1) from Kluyveromyces marxianus (Yeast).